The following is a 589-amino-acid chain: MWVLQALAIMLSIQAGVLDLVEVPPVVRSLPVALPAPVNLPAVLPGSPGLNDPAKNRMLPPKRPGAPSRGGKCAPAARYFLSSDKLQAYLLSILPPQIEDMVKCDKVNMEGVLGDILATMQDSNLLSILDITSLLQGGGGLGLGGLLGKEGNEDPSKPSSGSKATGGLGQLLPEGLPGKEGLGGLLNLGGGKGSGKGLLNGDGLSNVVKPLDDIVENVDSLKAAVQDKVKSVVPENIKDPFSDLLNMDIQETMLKLKVKQVKVGSTDINMGADGIKVLSEVTADVEGEGLLGPVFTLLQFQSVMDVTMNIAVSSNNTQCVNLDVQDTHMHVKEMNIQLLQTVTETVPLPTSLPLNDIIPIVLTAKMNENLEKSDSCGIVLSDFNDCKNTTGLFGYQVHTARISPKGLSIDYCVKANIDNKTVPVPGGRLPPDPKNANVSITTASSALRTLVKYVAKQSSVQMNDLEAQITYIAFAPQENNMLRLLYKVDITKDSQPYATGETKLFISHASKILNSKLVPDVKLTRSEHSVVPPETKEEVEGIMAEVTRKAWSRFNELYKKMSIPDGVSSNTLTNSDVKLLRSNDLQAAS.

The first 29 residues, 1–29 (MWVLQALAIMLSIQAGVLDLVEVPPVVRS), serve as a signal peptide directing secretion. 2 disordered regions span residues 49-71 (GLND…SRGG) and 146-170 (LLGK…GLGQ). N-linked (GlcNAc...) asparagine glycosylation is found at N419 and N437.

Post-translationally, N-glycosylated. The N-glycans consist mainly of complex sialylated and fucosylated biantennary structures. As to expression, abundant in the lateral nasal glands. Also present in the posterior septal and vomeronasal glands.

It is found in the secreted. This Rattus norvegicus (Rat) protein is Vomeromodulin.